Consider the following 125-residue polypeptide: Probable prefoldin subunit 6 (125 aa).

It belongs to the prefoldin subunit beta family. As to quaternary structure, heterohexamer of two PFD-alpha type and four PFD-beta type subunits.

Binds specifically to cytosolic chaperonin (c-CPN) and transfers target proteins to it. Binds to nascent polypeptide chain and promotes folding in an environment in which there are many competing pathways for nonnative proteins. The chain is Probable prefoldin subunit 6 from Drosophila melanogaster (Fruit fly).